Reading from the N-terminus, the 199-residue chain is MSASVKCGACAKTAYPLESVVANNNSYHKGCFKCSTCNSTLNVKTFKSFEGKLYCPVHTPKVSATAVTDSVALKNALNAPKKVAEGLGNAHRGLDEKPNIGLDSMATANALNAPKKVVEGLGNVQKGIGGKPTYAVFGADGQPTGEQQEQQQYTEEQYEQPQEEQQYQEEQQQYQEEEQQYQEEEQQYQEEEQQYEEEQ.

Residues 5–65 form the LIM zinc-binding domain; that stretch reads VKCGACAKTA…PVHTPKVSAT (61 aa). A disordered region spans residues 134 to 199; that stretch reads YAVFGADGQP…EEEQQYEEEQ (66 aa). 2 stretches are compositionally biased toward low complexity: residues 146–155 and 163–174; these read EQQEQQQYTE and EEQQYQEEQQQY. Over residues 175–199 the composition is skewed to acidic residues; sequence QEEEQQYQEEEQQYQEEEQQYEEEQ.

In terms of assembly, may interact with rac1A.

The protein resides in the cytoplasm. It localises to the cell cortex. It is found in the nucleus. The protein localises to the cell projection. Its subcellular location is the lamellipodium. The protein resides in the filopodium. It localises to the cytoskeleton. Its function is as follows. Associates with the actin cytoskeleton and may regulate actin polymerization in lamellipodia, through a rac1-dependent signaling pathway. May play a role in cell motility. Involved in cytokinesis by regulating the microtubule system and linking it to the cortical actin network. In Dictyostelium discoideum (Social amoeba), this protein is LIM domain-containing protein E (limE).